The primary structure comprises 202 residues: MTQLDSRTEATTTRAFDQPRAEAAVRELLLAIGEDPDRGGLRDTPARVARAYREIFAGLYTDPDAVLNTMFDEDHDELVLIKEIPLYSTCEHHLVSFHGVAHVGYIPGRDGRVTGLSKIARLVDLYAKRPQVQERLTSQIADALVKRLGPRGVIVVVEAEHLCMAMRGVRKPGAVTTTSAVRGQFKTDAASRAEALDLILRK.

Positions 90, 93, and 163 each coordinate Zn(2+).

Belongs to the GTP cyclohydrolase I family. As to quaternary structure, homomer.

It catalyses the reaction GTP + H2O = 7,8-dihydroneopterin 3'-triphosphate + formate + H(+). It participates in cofactor biosynthesis; 7,8-dihydroneopterin triphosphate biosynthesis; 7,8-dihydroneopterin triphosphate from GTP: step 1/1. The protein is GTP cyclohydrolase 1 of Mycobacterium marinum (strain ATCC BAA-535 / M).